A 261-amino-acid chain; its full sequence is Cytochrome c oxidase subunit 3 (261 aa).

Residues Met-1 to Pro-15 are Mitochondrial matrix-facing. A helical transmembrane segment spans residues Trp-16 to Trp-34. The Mitochondrial intermembrane segment spans residues Phe-35 to Met-40. The chain crosses the membrane as a helical span at residues Thr-41–Thr-66. Residues Phe-67–Thr-72 lie on the Mitochondrial matrix side of the membrane. The helical transmembrane segment at Pro-73–Ser-105 threads the bilayer. Residues Leu-106 to Glu-128 lie on the Mitochondrial intermembrane side of the membrane. The helical transmembrane segment at Val-129–Met-152 threads the bilayer. Over Glu-153 to Glu-155 the chain is Mitochondrial matrix. A helical transmembrane segment spans residues Arg-156 to Glu-183. At Ala-184 to Asp-190 the chain is on the mitochondrial intermembrane side. A helical membrane pass occupies residues Gly-191–Val-223. The Mitochondrial matrix segment spans residues Leu-224–His-232. Residues Phe-233 to Ile-256 traverse the membrane as a helical segment. The Mitochondrial intermembrane segment spans residues Tyr-257–Ser-261.

It belongs to the cytochrome c oxidase subunit 3 family. Component of the cytochrome c oxidase (complex IV, CIV), a multisubunit enzyme composed of 14 subunits. The complex is composed of a catalytic core of 3 subunits MT-CO1, MT-CO2 and MT-CO3, encoded in the mitochondrial DNA, and 11 supernumerary subunits COX4I, COX5A, COX5B, COX6A, COX6B, COX6C, COX7A, COX7B, COX7C, COX8 and NDUFA4, which are encoded in the nuclear genome. The complex exists as a monomer or a dimer and forms supercomplexes (SCs) in the inner mitochondrial membrane with NADH-ubiquinone oxidoreductase (complex I, CI) and ubiquinol-cytochrome c oxidoreductase (cytochrome b-c1 complex, complex III, CIII), resulting in different assemblies (supercomplex SCI(1)III(2)IV(1) and megacomplex MCI(2)III(2)IV(2)).

The protein localises to the mitochondrion inner membrane. The catalysed reaction is 4 Fe(II)-[cytochrome c] + O2 + 8 H(+)(in) = 4 Fe(III)-[cytochrome c] + 2 H2O + 4 H(+)(out). Component of the cytochrome c oxidase, the last enzyme in the mitochondrial electron transport chain which drives oxidative phosphorylation. The respiratory chain contains 3 multisubunit complexes succinate dehydrogenase (complex II, CII), ubiquinol-cytochrome c oxidoreductase (cytochrome b-c1 complex, complex III, CIII) and cytochrome c oxidase (complex IV, CIV), that cooperate to transfer electrons derived from NADH and succinate to molecular oxygen, creating an electrochemical gradient over the inner membrane that drives transmembrane transport and the ATP synthase. Cytochrome c oxidase is the component of the respiratory chain that catalyzes the reduction of oxygen to water. Electrons originating from reduced cytochrome c in the intermembrane space (IMS) are transferred via the dinuclear copper A center (CU(A)) of subunit 2 and heme A of subunit 1 to the active site in subunit 1, a binuclear center (BNC) formed by heme A3 and copper B (CU(B)). The BNC reduces molecular oxygen to 2 water molecules using 4 electrons from cytochrome c in the IMS and 4 protons from the mitochondrial matrix. The chain is Cytochrome c oxidase subunit 3 (mt-co3) from Danio rerio (Zebrafish).